Here is a 406-residue protein sequence, read N- to C-terminus: Prenyltransferase phqJ (406 aa).

Residues 1–19 (MTVSTESNFPHGASTQKPQ) are compositionally biased toward polar residues. Positions 1–23 (MTVSTESNFPHGASTQKPQSAEP) are disordered. Residue Glu99 participates in brevianamide F binding. The dimethylallyl diphosphate site is built by Arg113, Lys200, and Tyr202. Tyr204 lines the brevianamide F pocket. The dimethylallyl diphosphate site is built by Lys269, Tyr271, and Tyr340.

It belongs to the tryptophan dimethylallyltransferase family.

It participates in alkaloid biosynthesis. Prenyltransferase; part of the gene cluster that mediates the biosynthesis of paraherquamide, a fungal indole alkaloid that belongs to a family of natural products containing a characteristic bicyclo[2.2.2]diazaoctane core. The first steps in the biosynthesis of paraherquamide is the production of the beta-methyl-proline precursor from L-isoleucine. They require oxidation of a terminally hydroxylated L-isoleucine to the corresponding aldehyde by enzymes which have still to be identified. Spontaneous cyclization and dehydration would yield the 4-methyl pyrolline-5-carboxylic acid, which is then reduced by the pyrroline-5-carboxylate reductase phqD leading to the beta-methyl-proline precursor. The next step of paraherquamide biosynthesis involves coupling of beta-methyl-proline and L-tryptophan by the bimodular NRPS phqB, to produce a monooxopiperazine intermediate. The reductase (R) domain of phqB utilizes NADPH for hydride transfer to reduce the thioester bond of the T domain-tethered linear dipeptide to a hemithioaminal intermediate, which spontaneously cleaves the C-S bond to release the aldehyde product. This compound undergoes spontaneous cyclization and dehydration to give a dienamine which is reverse prenylated at C-2 by the reverse prenyltransferase phqJ. The other prenyltransferase present in the cluster, phqI may be a redundant gene in the pathway. During biosynthetic assembly, the key step to produce the polycyclic core is catalyzed by the bifunctional reductase and intramolecular [4+2] Diels-Alderase, phqE, resulting in formation of the [2.2.2] diazaoctane intermediate preparaherquamide. Following formation of preparaherquamide, an indole 2,3-epoxidation-initiated pinacol-like rearrangement is catalyzed by the phqK FAD-dependent monooxygenase. The prenyltransferase phqA, the cytochrome P450 monooxygenase phqL, and the FAD-linked oxidoreductase phqH (or the cytochrome P450 monooxygenase phqM), are proposed to be involved in the formation of the pyran ring. The FAD-dependent monooxygenase phqK is likely responsible for generation of the spiro-oxindole, and the N-methylation is likely mediated by the phqN methyltransferase leading to the isolable natural product paraherquamide F. However, the order of these biosynthetic steps has still to be determined. In late-stage paraherquamide biosynthesis, the third P450 monooxygenase, phqO, is probably responsible for the C-14 hydroxylation, transforming paraherquamide F to paraherquamide G, and paraherquamide E to the final product paraherquamide A. The expansion from the 6-membered ring pyran (in paraherquamides F and G) to the 7-membered dioxepin ring (in paraherquamides A and E) represents a poorly understood but intriguing process that probably involves the 2-oxoglutarate-dependent dioxygenase phqC. Finally, the remaining members of the paraherquamide cluster, including phqI as well as phqM (or phqH), do not have a clearly prescribed role and appear to be redundant. In Penicillium fellutanum, this protein is Prenyltransferase phqJ.